The sequence spans 66 residues: Large ribosomal subunit protein bL35 (66 aa).

Residues 20 to 40 (GKVKHAQRGKRHGMIKRTKKQ) are disordered.

The protein belongs to the bacterial ribosomal protein bL35 family.

This chain is Large ribosomal subunit protein bL35, found in Nitrobacter winogradskyi (strain ATCC 25391 / DSM 10237 / CIP 104748 / NCIMB 11846 / Nb-255).